The chain runs to 472 residues: ESX-3 secretion system protein EccD3 (472 aa).

The next 11 membrane-spanning stretches (helical) occupy residues 121–141, 155–175, 183–203, 211–231, 236–256, 258–278, 327–347, 349–369, 381–401, 405–425, and 450–470; these read WGIAHIQRGALAAVIAVALLA, LAGLLAVAGIAVASALAGLLI, GIALSIAALVPIGAALALAVP, VLLGAAGVAAWSLIALMIPSA, VVAFFTAAAVVGASVALAAGA, LLWQLPLLSIGCGLIVAALLV, QSGFIAAAVLLSVLGSVAIAV, PEALSVVGWYLVAATAAAATL, AWLLAQPYLVAGVLLVFYTAT, VAAFGAVLVLAVLMLAWVVVA, and GLDVSLIPVMAYLVGLFAWVL.

Belongs to the EccD/Snm4 family. In terms of assembly, part of the ESX-3 / type VII secretion system (T7SS), which is composed of cytosolic and membrane components. The ESX-3 membrane complex is composed of EccB3, EccC3, EccD3 and EccE3.

It localises to the cell inner membrane. In terms of biological role, part of the ESX-3 specialized secretion system, which is important for iron and zinc uptake or homeostasis. The protein is ESX-3 secretion system protein EccD3 of Mycobacterium tuberculosis (strain CDC 1551 / Oshkosh).